The sequence spans 554 residues: ATP-dependent RNA helicase MRH4, mitochondrial (554 aa).

The N-terminal 54 residues, 1–54 (MSSVGIASASLWLRGPVKSALKGRWLSCEQMRRYGTKSAPAVRKGGHSKKARQA), are a transit peptide targeting the mitochondrion. Positions 119-140 (DCGLDDKRVAAFLGQVQPTPIQ) match the Q motif motif. In terms of domain architecture, Helicase ATP-binding spans 150–337 (TLMEPQLQVH…NKLFPNLQVV (188 aa)). ATP is bound at residue 163-170 (AETGSGKT). A DEAD box motif is present at residues 285–288 (DEAD). The region spanning 368 to 554 (ALAQALYAIM…PVVKKNRPIQ (187 aa)) is the Helicase C-terminal domain. Residues 439 to 474 (RIQDQVRPSELKKPQERRLPNSNIKVADSKDNGQRS) form a disordered region. Over residues 445–457 (RPSELKKPQERRL) the composition is skewed to basic and acidic residues.

The protein belongs to the DEAD box helicase family. MRH4 subfamily.

It is found in the mitochondrion. The catalysed reaction is ATP + H2O = ADP + phosphate + H(+). Functionally, ATP-binding RNA helicase involved in mitochondrial RNA metabolism. Required for maintenance of mitochondrial DNA. This chain is ATP-dependent RNA helicase MRH4, mitochondrial (MRH4), found in Eremothecium gossypii (strain ATCC 10895 / CBS 109.51 / FGSC 9923 / NRRL Y-1056) (Yeast).